The primary structure comprises 81 residues: Defensin-like protein 130 (81 aa).

Residues 1–21 (MTKNTSLTIFMVVLVIGMLYT) form the signal peptide. 4 cysteine pairs are disulfide-bonded: C32/C81, C41/C63, C46/C75, and C50/C77.

This sequence belongs to the DEFL family.

The protein resides in the secreted. This chain is Defensin-like protein 130 (LCR28), found in Arabidopsis thaliana (Mouse-ear cress).